A 366-amino-acid polypeptide reads, in one-letter code: Protein sigma-NS (366 aa).

Residues 1-11 form an important for ssRNA-binding and formation of complexes region; sequence MASSLRAAISK.

The protein belongs to the orthoreovirus sigma-NS protein family. As to quaternary structure, homooligomer; in presence of RNA. Interacts with protein mu-NS; this interaction allows the localization of sigma-NS to the viral factories. Interacts with host G3BP1 (via C-terminus); this interaction induces the relocalization of G3BP1 and other SG proteins to the viral factories periphery.

It localises to the host cytoplasm. In terms of biological role, protein that binds to ssRNA and participates with protein mu-NS in forming the matrix of viral factories, which are large inclusions in the host cytoplasm where replication intermediates are assembled and viral RNA replication takes place. Plays a role in the inhibition of the integrated stress response (ISR) to escape from host cell translational shutoff. Participates in the disruption of stress granules (SG) through its association with host G3BP1 and mu-NS. This is Protein sigma-NS (S3) from Mammalia (T1L).